Reading from the N-terminus, the 452-residue chain is Putative tripartite motif-containing protein 49B (452 aa).

An RING-type zinc finger spans residues 15-56; sequence CPICMNYFIDPVTIDCGHSFCRPCFYLNWKDSPFLVQCSECT. A B box-type zinc finger spans residues 88–129; that stretch reads SEEQMCGTHRETKKMFCEVDRSLLCLLCSSSQEHRDHRHCPI. Positions 93, 96, 115, and 121 each coordinate Zn(2+). The 184-residue stretch at 269–452 folds into the B30.2/SPRY domain; that stretch reads ELSAGPITGL…LRPIFCCIHF (184 aa).

This sequence belongs to the TRIM/RBCC family.

The polypeptide is Putative tripartite motif-containing protein 49B (TRIM49B) (Homo sapiens (Human)).